The sequence spans 438 residues: Glutamate-1-semialdehyde 2,1-aminomutase (438 aa).

Residue Lys274 is modified to N6-(pyridoxal phosphate)lysine.

Belongs to the class-III pyridoxal-phosphate-dependent aminotransferase family. HemL subfamily. Homodimer. Pyridoxal 5'-phosphate is required as a cofactor.

Its subcellular location is the cytoplasm. The catalysed reaction is (S)-4-amino-5-oxopentanoate = 5-aminolevulinate. The protein operates within porphyrin-containing compound metabolism; protoporphyrin-IX biosynthesis; 5-aminolevulinate from L-glutamyl-tRNA(Glu): step 2/2. The chain is Glutamate-1-semialdehyde 2,1-aminomutase from Salinibacter ruber (strain DSM 13855 / M31).